The chain runs to 164 residues: Cyclin-dependent kinase inhibitor 1 (164 aa).

S2 is modified (N-acetylserine). Residue S2 forms a Glycyl serine ester (Ser-Gly) (interchain with G-Cter in ubiquitin) linkage. Residues 13 to 41 form a C4-type zinc finger; it reads CGSKACRRLFGPVDSEQLSRDCDALMAGC. The interval 17 to 24 is required for binding cyclins; it reads ACRRLFGP. Residues 53–58 form a required for binding CDKs region; the sequence is FVTETP. Residues 76–164 form a disordered region; that stretch reads LYLPTGPRRG…RRLIFSKRKP (89 aa). T80 is subject to Phosphothreonine; by LKB1. At S114 the chain carries Phosphoserine; by GSK3-beta. Residue S130 is modified to Phosphoserine. The PIP-box K+4 motif signature appears at 140-164; the sequence is RKRRQTSMTDFYHSKRRLIFSKRKP. Positions 141–156 match the Nuclear localization signal motif; the sequence is KRRQTSMTDFYHSKRR. T145 carries the phosphothreonine; by PKA, PKB/AKT1, PIM1 and PIM2 modification. S146 bears the Phosphoserine; by PKC and NUAK1 mark. The segment at 152–164 is interaction with TRIM39; it reads HSKRRLIFSKRKP. Residues 153–164 are compositionally biased toward basic residues; it reads SKRRLIFSKRKP. Position 160 is a phosphoserine; by PKC; in vitro (S160).

This sequence belongs to the CDI family. As to quaternary structure, interacts with HDAC1; the interaction is prevented by competitive binding of C10orf90/FATS to HDAC1 facilitating acetylation and protein stabilization of CDKN1A/p21. Interacts with MKRN1. Interacts with PSMA3. Interacts with PCNA. Component of the ternary complex, cyclin D-CDK4-CDKN1A. Interacts (via its N-terminal domain) with CDK4; the interaction promotes the assembly of the cyclin D-CDK4 complex, its nuclear translocation and promotes the cyclin D-dependent enzyme activity of CDK4. Binding to CDK2 leads to CDK2/cyclin E inactivation at the G1-S phase DNA damage checkpoint, thereby arresting cells at the G1-S transition during DNA repair. Interacts with PIM1. Interacts with STK11 and NUAK1. Interacts wih DTL. Interacts with isoform 1 and isoform 2 of TRIM39. Interacts with PKP3; the interaction sequesters CDKN1A to the cytoplasm thereby repressing its role as an inhibitor of CDK4- and CDK6-driven RB1 phosphorylation. Post-translationally, phosphorylation of Thr-145 by Akt or of Ser-146 by PKC impairs binding to PCNA. Phosphorylation at Ser-114 by GSK3-beta enhances ubiquitination by the DCX(DTL) complex. Phosphorylation of Thr-145 by PIM2 enhances CDKN1A stability and inhibits cell proliferation. Phosphorylation of Thr-145 by PIM1 results in the relocation of CDKN1A to the cytoplasm and enhanced CDKN1A protein stability. UV radiation-induced phosphorylation at Thr-80 by LKB1 and at Ser-146 by NUAK1 leads to its degradation. In terms of processing, ubiquitinated by MKRN1; leading to polyubiquitination and 26S proteasome-dependent degradation. Ubiquitinated by the DCX(DTL) complex, also named CRL4(CDT2) complex, leading to its degradation during S phase or following UV irradiation. Ubiquitination by the DCX(DTL) complex is essential to control replication licensing and is PCNA-dependent: interacts with PCNA via its PIP-box, while the presence of the containing the 'K+4' motif in the PIP box, recruit the DCX(DTL) complex, leading to its degradation. Ubiquitination at Ser-2 leads to degradation by the proteasome pathway. Ubiquitinated by RNF114; leading to proteasomal degradation. Acetylation leads to protein stability. Acetylated in vitro on Lys-141, Lys-154, Lys-161 and Lys-163. Deacetylation by HDAC1 is prevented by competitive binding of C10orf90/FATS to HDAC1. As to expression, expressed in all adult tissues, with 5-fold lower levels observed in the brain.

It is found in the cytoplasm. The protein resides in the nucleus. In terms of biological role, plays an important role in controlling cell cycle progression and DNA damage-induced G2 arrest. Involved in p53/TP53 mediated inhibition of cellular proliferation in response to DNA damage. Also involved in p53-independent DNA damage-induced G2 arrest mediated by CREB3L1 in astrocytes and osteoblasts. Binds to and inhibits cyclin-dependent kinase activity, preventing phosphorylation of critical cyclin-dependent kinase substrates and blocking cell cycle progression. Functions in the nuclear localization and assembly of cyclin D-CDK4 complex and promotes its kinase activity towards RB1. At higher stoichiometric ratios, inhibits the kinase activity of the cyclin D-CDK4 complex. Inhibits DNA synthesis by DNA polymerase delta by competing with POLD3 for PCNA binding. Negatively regulates the CDK4- and CDK6-driven phosphorylation of RB1 in keratinocytes, thereby resulting in the release of E2F1 and subsequent transcription of E2F1-driven G1/S phase promoting genes. The protein is Cyclin-dependent kinase inhibitor 1 of Homo sapiens (Human).